A 116-amino-acid polypeptide reads, in one-letter code: Staphylococcal complement inhibitor (116 aa).

An N-terminal signal peptide occupies residues methionine 1 to alanine 31. The segment at leucine 62–glycine 79 is essential for activity.

This sequence belongs to the SCIN family.

It is found in the secreted. Involved in countering the first line of host defense mechanisms. Efficiently inhibits opsonization, phagocytosis and killing of S.aureus by human neutrophils. Acts by binding and stabilizing human C3 convertases (C4b2a and C3bBb), leading to their inactivation. The convertases are no longer able to cleave complement C3, therefore preventing further C3b deposition on the bacterial surface and phagocytosis of the bacterium. Also prevents C5a-induced neutrophil responses. This Staphylococcus aureus (strain Mu50 / ATCC 700699) protein is Staphylococcal complement inhibitor (scn).